The sequence spans 209 residues: Large ribosomal subunit protein uL3 (209 aa).

This sequence belongs to the universal ribosomal protein uL3 family. As to quaternary structure, part of the 50S ribosomal subunit. Forms a cluster with proteins L14 and L19.

Functionally, one of the primary rRNA binding proteins, it binds directly near the 3'-end of the 23S rRNA, where it nucleates assembly of the 50S subunit. The chain is Large ribosomal subunit protein uL3 from Carboxydothermus hydrogenoformans (strain ATCC BAA-161 / DSM 6008 / Z-2901).